A 350-amino-acid polypeptide reads, in one-letter code: uncharacterized protein (350 aa).

5 residues coordinate Mn(2+): D214, D225, H289, E318, and E332.

Belongs to the peptidase M24B family. Requires Mn(2+) as cofactor.

This is an uncharacterized protein from Staphylococcus saprophyticus subsp. saprophyticus (strain ATCC 15305 / DSM 20229 / NCIMB 8711 / NCTC 7292 / S-41).